Reading from the N-terminus, the 620-residue chain is 1-deoxy-D-xylulose-5-phosphate synthase (620 aa).

Thiamine diphosphate is bound by residues H80 and 121–123 (GHS). D152 is a binding site for Mg(2+). Thiamine diphosphate contacts are provided by residues 153-154 (GA), N181, Y288, and E370. N181 contributes to the Mg(2+) binding site.

Belongs to the transketolase family. DXPS subfamily. As to quaternary structure, homodimer. The cofactor is Mg(2+). Thiamine diphosphate is required as a cofactor.

It carries out the reaction D-glyceraldehyde 3-phosphate + pyruvate + H(+) = 1-deoxy-D-xylulose 5-phosphate + CO2. The protein operates within metabolic intermediate biosynthesis; 1-deoxy-D-xylulose 5-phosphate biosynthesis; 1-deoxy-D-xylulose 5-phosphate from D-glyceraldehyde 3-phosphate and pyruvate: step 1/1. Functionally, catalyzes the acyloin condensation reaction between C atoms 2 and 3 of pyruvate and glyceraldehyde 3-phosphate to yield 1-deoxy-D-xylulose-5-phosphate (DXP). The polypeptide is 1-deoxy-D-xylulose-5-phosphate synthase (Escherichia fergusonii (strain ATCC 35469 / DSM 13698 / CCUG 18766 / IAM 14443 / JCM 21226 / LMG 7866 / NBRC 102419 / NCTC 12128 / CDC 0568-73)).